The chain runs to 168 residues: Plasma membrane-associated cation-binding protein 2 (168 aa).

The N-myristoyl glycine moiety is linked to residue Gly-2. 7 repeat units span residues 26-30, 69-73, 94-99, 103-107, 110-115, 118-122, and 124-129. Residues 26-129 are 7 X 5 AA approximate repeats of V-E-E-K-K; that stretch reads VEEEKPREVE…EKKPVEEEKK (104 aa). Residues 56–77 adopt a coiled-coil conformation; sequence EEIIATGEKEIEIVEEKKEEAK. Residues 88–131 are compositionally biased toward basic and acidic residues; that stretch reads EEKKPAVEEEKKTAPVEEKKPAVEEEKKPAVEEKKPVEEEKKEV. Positions 88 to 168 are disordered; sequence EEKKPAVEEE…ETPAAAPQKA (81 aa). Over residues 152-168 the composition is skewed to low complexity; sequence ETPAKAPETPAAAPQKA.

This sequence belongs to the DREPP family. In terms of assembly, binds microtubules. Interacts with calcium ion Ca(2+), calmodulin and some phosphatidylinositol phosphates (PtdInsPs) such as phosphatidylinositol 3,5-bisphosphate [PtdIns(3,5)P(2)], PtdIns(4,5)P(2) and PtdIns(3,4,5)P(3). Cu(2+) is required as a cofactor. Mostly expressed in the expanding cells, specifically in roots (except in root tips) and flowers (at protein level). Also detected in cotyledons, hypocotyls and trichome stalks.

It is found in the cell membrane. It localises to the cytoplasm. Its subcellular location is the cytoskeleton. Functionally, may be involved in intracellular signaling through interaction with PtdInsPs and calmodulin (CaM); may keep PtdInsPs attached to the plasma membrane until Ca(2+)-CaM reaches a competitive concentration subsequent to an increase triggered by a stimulus, thus leading to PtdInsPs release and subsequent activation of InsPs-dependent signaling cascade. Binds to microtubules and inhibits tubulin polymerization. Regulates directional cell growth and cortical microtubule organization by destabilizing microtubules (e.g. in cotyledon pavement cells). In Arabidopsis thaliana (Mouse-ear cress), this protein is Plasma membrane-associated cation-binding protein 2.